The sequence spans 281 residues: 2-dehydro-3-deoxyphosphooctonate aldolase (281 aa).

This sequence belongs to the KdsA family.

It is found in the cytoplasm. It carries out the reaction D-arabinose 5-phosphate + phosphoenolpyruvate + H2O = 3-deoxy-alpha-D-manno-2-octulosonate-8-phosphate + phosphate. It functions in the pathway carbohydrate biosynthesis; 3-deoxy-D-manno-octulosonate biosynthesis; 3-deoxy-D-manno-octulosonate from D-ribulose 5-phosphate: step 2/3. It participates in bacterial outer membrane biogenesis; lipopolysaccharide biosynthesis. The protein is 2-dehydro-3-deoxyphosphooctonate aldolase of Pseudomonas syringae pv. tomato (strain ATCC BAA-871 / DC3000).